The chain runs to 182 residues: Large ribosomal subunit protein uL16 (182 aa).

The disordered stretch occupies residues 140–182; the sequence is EKPTQVGKAPPKSSFLPSDETETAAAQAGTEASSASSVTPLES. Residues 162-176 are compositionally biased toward low complexity; it reads TAAAQAGTEASSASS.

It belongs to the universal ribosomal protein uL16 family. As to quaternary structure, part of the 50S ribosomal subunit.

Functionally, binds 23S rRNA and is also seen to make contacts with the A and possibly P site tRNAs. This chain is Large ribosomal subunit protein uL16, found in Prochlorococcus marinus (strain SARG / CCMP1375 / SS120).